A 513-amino-acid chain; its full sequence is ATP synthase subunit alpha (513 aa).

169 to 176 (GDRQTGKS) serves as a coordination point for ATP.

It belongs to the ATPase alpha/beta chains family. As to quaternary structure, F-type ATPases have 2 components, CF(1) - the catalytic core - and CF(0) - the membrane proton channel. CF(1) has five subunits: alpha(3), beta(3), gamma(1), delta(1), epsilon(1). CF(0) has three main subunits: a(1), b(2) and c(9-12). The alpha and beta chains form an alternating ring which encloses part of the gamma chain. CF(1) is attached to CF(0) by a central stalk formed by the gamma and epsilon chains, while a peripheral stalk is formed by the delta and b chains.

It localises to the cell inner membrane. It carries out the reaction ATP + H2O + 4 H(+)(in) = ADP + phosphate + 5 H(+)(out). In terms of biological role, produces ATP from ADP in the presence of a proton gradient across the membrane. The alpha chain is a regulatory subunit. This chain is ATP synthase subunit alpha, found in Sodalis glossinidius (strain morsitans).